A 414-amino-acid polypeptide reads, in one-letter code: Probable 26S proteasome regulatory subunit 6B (414 aa).

202 to 209 (GPPGCGKT) provides a ligand contact to ATP.

The protein belongs to the AAA ATPase family.

It is found in the cytoplasm. The protein resides in the nucleus. Functionally, the 26S proteasome is involved in the ATP-dependent degradation of ubiquitinated proteins. The regulatory (or ATPase) complex confers ATP dependency and substrate specificity to the 26S complex. The sequence is that of Probable 26S proteasome regulatory subunit 6B (rpt-3) from Caenorhabditis elegans.